The following is a 285-amino-acid chain: Pantothenate synthetase (285 aa).

30–37 (MGNLHRGH) serves as a coordination point for ATP. Catalysis depends on His-37, which acts as the Proton donor. A (R)-pantoate-binding site is contributed by Gln-61. Gln-61 serves as a coordination point for beta-alanine. 149-152 (GRKD) is an ATP binding site. A (R)-pantoate-binding site is contributed by Gln-155. Residues Val-178 and 186-189 (LSSR) contribute to the ATP site.

The protein belongs to the pantothenate synthetase family. Homodimer.

The protein localises to the cytoplasm. It carries out the reaction (R)-pantoate + beta-alanine + ATP = (R)-pantothenate + AMP + diphosphate + H(+). Its pathway is cofactor biosynthesis; (R)-pantothenate biosynthesis; (R)-pantothenate from (R)-pantoate and beta-alanine: step 1/1. Catalyzes the condensation of pantoate with beta-alanine in an ATP-dependent reaction via a pantoyl-adenylate intermediate. The protein is Pantothenate synthetase of Halorhodospira halophila (strain DSM 244 / SL1) (Ectothiorhodospira halophila (strain DSM 244 / SL1)).